The primary structure comprises 615 residues: RNA polymerase sigma factor RpoD (615 aa).

A disordered region spans residues alanine 177–aspartate 215. The span at serine 188 to isoleucine 214 shows a compositional bias: acidic residues. The tract at residues methionine 381–threonine 451 is sigma-70 factor domain-2. The Interaction with polymerase core subunit RpoC motif lies at aspartate 405–glutamine 408. The segment at glutamate 460 to serine 536 is sigma-70 factor domain-3. Residues valine 549–histidine 602 form a sigma-70 factor domain-4 region. A DNA-binding region (H-T-H motif) is located at residues leucine 575–alanine 594.

The protein belongs to the sigma-70 factor family. RpoD/SigA subfamily. As to quaternary structure, interacts transiently with the RNA polymerase catalytic core.

It localises to the cytoplasm. Functionally, sigma factors are initiation factors that promote the attachment of RNA polymerase to specific initiation sites and are then released. This sigma factor is the primary sigma factor during exponential growth. This Salmonella typhi protein is RNA polymerase sigma factor RpoD.